The chain runs to 348 residues: Phenylalanine--tRNA ligase alpha subunit (348 aa).

Position 262 (E262) interacts with Mg(2+).

It belongs to the class-II aminoacyl-tRNA synthetase family. Phe-tRNA synthetase alpha subunit type 1 subfamily. As to quaternary structure, tetramer of two alpha and two beta subunits. Mg(2+) serves as cofactor.

Its subcellular location is the cytoplasm. The enzyme catalyses tRNA(Phe) + L-phenylalanine + ATP = L-phenylalanyl-tRNA(Phe) + AMP + diphosphate + H(+). This is Phenylalanine--tRNA ligase alpha subunit from Streptococcus pneumoniae (strain JJA).